The primary structure comprises 214 residues: tRNA (guanine-N(7)-)-methyltransferase (214 aa).

Residues E43, E68, D95, and D117 each coordinate S-adenosyl-L-methionine. D117 is a catalytic residue. Substrate is bound by residues K121, D153, and 190 to 193 (TEYE).

This sequence belongs to the class I-like SAM-binding methyltransferase superfamily. TrmB family.

The catalysed reaction is guanosine(46) in tRNA + S-adenosyl-L-methionine = N(7)-methylguanosine(46) in tRNA + S-adenosyl-L-homocysteine. It participates in tRNA modification; N(7)-methylguanine-tRNA biosynthesis. Catalyzes the formation of N(7)-methylguanine at position 46 (m7G46) in tRNA. This Staphylococcus aureus (strain USA300) protein is tRNA (guanine-N(7)-)-methyltransferase.